A 294-amino-acid chain; its full sequence is MDAKQTRQGVLLALAAYFIWGIAPAYFKLIYYVPADEILTHRVIWSFFFMVALLSVSRQWRQVKRLLKTPKKIFLLALSAVLVGGNWLLFIWAVNNHHMLEASLGYFINPLVNILLGMIFLGERFRRMQWLAVILAVCGVLVQLWTFGSLPIIALGLAFSFAFYGLVRKKIAVEAQTGMLVETLWLLPVAAIYLFSIADSATSHMGQNALSLNLLLMAAGVVTTIPLLCFTGAATRLRLSTLGFFQYIGPTLMFLLAVTFYGEVPGADKMVTFAFIWVALAIFVMDAIYTQRKK.

Over 1–11 (MDAKQTRQGVL) the chain is Cytoplasmic. A helical membrane pass occupies residues 12–34 (LALAAYFIWGIAPAYFKLIYYVP). The EamA domain maps to 18-145 (FIWGIAPAYF…AVCGVLVQLW (128 aa)). Over 35-37 (ADE) the chain is Periplasmic. Residues 38-60 (ILTHRVIWSFFFMVALLSVSRQW) traverse the membrane as a helical segment. Residues 61-72 (RQVKRLLKTPKK) are Cytoplasmic-facing. A helical membrane pass occupies residues 73 to 95 (IFLLALSAVLVGGNWLLFIWAVN). The Periplasmic portion of the chain corresponds to 96–99 (NHHM). The helical transmembrane segment at 100 to 122 (LEASLGYFINPLVNILLGMIFLG) threads the bilayer. Residues 123-128 (ERFRRM) are Cytoplasmic-facing. The chain crosses the membrane as a helical span at residues 129–146 (QWLAVILAVCGVLVQLWT). Residues 147–149 (FGS) lie on the Periplasmic side of the membrane. Residues 150–167 (LPIIALGLAFSFAFYGLV) traverse the membrane as a helical segment. Over 168–179 (RKKIAVEAQTGM) the chain is Cytoplasmic. Residues 180–197 (LVETLWLLPVAAIYLFSI) traverse the membrane as a helical segment. At 198–211 (ADSATSHMGQNALS) the chain is on the periplasmic side. Residues 212-234 (LNLLLMAAGVVTTIPLLCFTGAA) form a helical membrane-spanning segment. Topologically, residues 235–238 (TRLR) are cytoplasmic. The helical transmembrane segment at 239–261 (LSTLGFFQYIGPTLMFLLAVTFY) threads the bilayer. Residues 262–270 (GEVPGADKM) are Periplasmic-facing. The chain crosses the membrane as a helical span at residues 271-290 (VTFAFIWVALAIFVMDAIYT). Residues 291 to 294 (QRKK) are Cytoplasmic-facing.

This sequence belongs to the EamA transporter family.

It is found in the cell inner membrane. The chain is Protein RarD (rarD) from Salmonella typhi.